Reading from the N-terminus, the 356-residue chain is Uroporphyrinogen decarboxylase (356 aa).

Residues 27–31 (RQAGR), Asp-77, Tyr-154, Thr-209, and His-327 each bind substrate.

The protein belongs to the uroporphyrinogen decarboxylase family. Homodimer.

It is found in the cytoplasm. The catalysed reaction is uroporphyrinogen III + 4 H(+) = coproporphyrinogen III + 4 CO2. The protein operates within porphyrin-containing compound metabolism; protoporphyrin-IX biosynthesis; coproporphyrinogen-III from 5-aminolevulinate: step 4/4. Functionally, catalyzes the decarboxylation of four acetate groups of uroporphyrinogen-III to yield coproporphyrinogen-III. The chain is Uroporphyrinogen decarboxylase from Cellvibrio japonicus (strain Ueda107) (Pseudomonas fluorescens subsp. cellulosa).